The sequence spans 852 residues: GPI ethanolamine phosphate transferase 2 (852 aa).

Asn191 and Asn420 each carry an N-linked (GlcNAc...) asparagine glycan. 3 helical membrane-spanning segments follow: residues 458–478, 486–506, and 516–536; these read LIRL…TFFP, FAPA…MMFA, and FWYW…AGHF. Asn576 carries N-linked (GlcNAc...) asparagine glycosylation. Transmembrane regions (helical) follow at residues 632-652, 676-696, 714-734, 750-770, 787-807, and 824-844; these read LLYH…YSLY, TLTL…FLVF, TITS…SNAI, SVFI…IWWV, AHVT…MAAC, and YLYT…LGEI.

It belongs to the PIGG/PIGN/PIGO family. PIGG subfamily.

The protein localises to the endoplasmic reticulum membrane. Its pathway is glycolipid biosynthesis; glycosylphosphatidylinositol-anchor biosynthesis. In terms of biological role, ethanolamine phosphate transferase involved in glycosylphosphatidylinositol-anchor biosynthesis. Transfers ethanolamine phosphate to the GPI second mannose. The chain is GPI ethanolamine phosphate transferase 2 (las21) from Aspergillus oryzae (strain ATCC 42149 / RIB 40) (Yellow koji mold).